We begin with the raw amino-acid sequence, 50 residues long: AANPHLCGSHLVEALYLVCGERGFFYQPKGIHZZCCHKPCBIFZLZBYCN.

Intrachain disulfides connect Cys-7–Cys-36, Cys-19–Cys-49, and Cys-35–Cys-40.

Belongs to the insulin family. Heterodimer of a B chain and an A chain linked by two disulfide bonds.

The protein localises to the secreted. Functionally, insulin decreases blood glucose concentration. It increases cell permeability to monosaccharides, amino acids and fatty acids. It accelerates glycolysis, the pentose phosphate cycle, and glycogen synthesis in liver. The sequence is that of Insulin (ins) from Katsuwonus pelamis (Skipjack tuna).